A 590-amino-acid chain; its full sequence is Regulatory solute carrier protein family 1 member 1 (590 aa).

Disordered stretches follow at residues 1–116, 144–234, 277–331, and 359–466; these read MSSS…TQGL, EEGW…PDSE, SPSS…AEES, and EEVT…SHRT. Residues 16 to 35 show a composition bias toward polar residues; sequence SSGQSPEAGNPTSLARSVSA. Low complexity predominate over residues 78–91; the sequence is SPCAAAAAPSSAMP. Over residues 150-161 the composition is skewed to polar residues; the sequence is ENQNPSQVNDLQ. 2 stretches are compositionally biased toward basic and acidic residues: residues 162–179 and 188–203; these read QHQE…RDAP and PGER…REAT. Over residues 313–331 the composition is skewed to low complexity; sequence SSSSVCGSSQPPAESAEES. The segment covering 362-376 has biased composition (polar residues); sequence TCQSEGTAWGQTRVN. Basic and acidic residues-rich tracts occupy residues 380–395 and 404–420; these read RWTE…DRPQ and VKTE…RIED. The span at 451–465 shows a compositional bias: polar residues; it reads SVTVTSAETSNQSHR. Positions 544–584 constitute a UBA domain; it reads GFPAADIDRILRAGFTLQEALGALHRVGGNADLALLVLLAK.

As to quaternary structure, interacts with YRDC. In terms of tissue distribution, highly expressed in renal outer medulla, renal inner medulla, duodenum, ileum and jejunum. Moderately expressed in renal outer cortex, renal papilla, brain and liver.

It localises to the cell membrane. The protein localises to the nucleus. The protein resides in the golgi apparatus. It is found in the trans-Golgi network. In terms of biological role, mediates transcriptional and post-transcriptional regulation of SLC5A1. Inhibits a dynamin and PKC-dependent exocytotic pathway of SLC5A1. Also involved in transcriptional regulation of SLC22A2. Exhibits glucose-dependent, short-term inhibition of SLC5A1 and SLC22A2 by inhibiting the release of vesicles from the trans-Golgi network. This Oryctolagus cuniculus (Rabbit) protein is Regulatory solute carrier protein family 1 member 1 (RSC1A1).